A 100-amino-acid chain; its full sequence is Small ribosomal subunit protein bS18c (100 aa).

Over residues 1–19 (MDKSKRPFRKSKRSFRRRL) the composition is skewed to basic residues. A disordered region spans residues 1–23 (MDKSKRPFRKSKRSFRRRLPPIG).

The protein belongs to the bacterial ribosomal protein bS18 family. In terms of assembly, part of the 30S ribosomal subunit.

The protein resides in the plastid. The protein localises to the chloroplast. The polypeptide is Small ribosomal subunit protein bS18c (Calycanthus floridus var. glaucus (Eastern sweetshrub)).